The following is a 286-amino-acid chain: L-cysteine S-thiosulfotransferase subunit SoxA (286 aa).

An N-terminal signal peptide occupies residues 1 to 27; the sequence is MKKTIQRGLFTGALVLMTAMTAKPANA. An intrachain disulfide couples Cys-106 to Cys-137. The Cytochrome c domain occupies 180 to 286; sequence DAYMKGKKFF…LKYNGPASRK (107 aa). Residues Cys-200 and His-204 each contribute to the heme site. Arg-243 contacts substrate. Cys-247 serves as a coordination point for heme. The active-site Cysteine persulfide intermediate is Cys-247.

The protein belongs to the SoxA family. In terms of assembly, heterodimer of SoxA and SoxX. The SoxAX complex interacts with CT1020, SoxAX-binding protein SaxB (SoxK); this interaction seems to be between SoxA and CT1020 and stimulates catalytic activity of the SoxAX complex. It depends on heme as a cofactor. Post-translationally, cysteine persulfide at Cys-247.

It is found in the periplasm. It carries out the reaction L-cysteinyl-[SoxY protein] + thiosulfate + 2 Fe(III)-[cytochrome c] = S-sulfosulfanyl-L-cysteinyl-[SoxY protein] + 2 Fe(II)-[cytochrome c] + 2 H(+). It catalyses the reaction S-sulfanyl-L-cysteinyl-[SoxY protein] + thiosulfate + 2 Fe(III)-[cytochrome c] = S-(2-sulfodisulfanyl)-L-cysteinyl-[SoxY protein] + 2 Fe(II)-[cytochrome c] + 2 H(+). In terms of biological role, C-type monoheme cytochrome, which is part of the SoxAX cytochrome complex involved in sulfur oxidation. The SoxAX complex catalyzes the formation of a heterodisulfide bond between the conserved cysteine residue on a sulfur carrier SoxYZ complex subunit SoxY and thiosulfate or other inorganic sulfur substrates. This leads to the liberation of two electrons, which may be transferred from the SoxAX complex to another cytochrome c and which then may be used for reductive CO(2) fixation. The polypeptide is L-cysteine S-thiosulfotransferase subunit SoxA (Chlorobaculum tepidum (strain ATCC 49652 / DSM 12025 / NBRC 103806 / TLS) (Chlorobium tepidum)).